Consider the following 571-residue polypeptide: Proline--tRNA ligase (571 aa).

It belongs to the class-II aminoacyl-tRNA synthetase family. ProS type 1 subfamily. In terms of assembly, homodimer.

Its subcellular location is the cytoplasm. It catalyses the reaction tRNA(Pro) + L-proline + ATP = L-prolyl-tRNA(Pro) + AMP + diphosphate. Catalyzes the attachment of proline to tRNA(Pro) in a two-step reaction: proline is first activated by ATP to form Pro-AMP and then transferred to the acceptor end of tRNA(Pro). As ProRS can inadvertently accommodate and process non-cognate amino acids such as alanine and cysteine, to avoid such errors it has two additional distinct editing activities against alanine. One activity is designated as 'pretransfer' editing and involves the tRNA(Pro)-independent hydrolysis of activated Ala-AMP. The other activity is designated 'posttransfer' editing and involves deacylation of mischarged Ala-tRNA(Pro). The misacylated Cys-tRNA(Pro) is not edited by ProRS. This Ligilactobacillus salivarius (strain UCC118) (Lactobacillus salivarius) protein is Proline--tRNA ligase.